A 119-amino-acid polypeptide reads, in one-letter code: V-type proton ATPase subunit F (119 aa).

Belongs to the V-ATPase F subunit family. V-ATPase is a heteromultimeric enzyme made up of two complexes: the ATP-hydrolytic V1 complex and the proton translocation V0 complex. The V1 complex consists of three catalytic AB heterodimers that form a heterohexamer, three peripheral stalks each consisting of EG heterodimers, one central rotor including subunits D and F, and the regulatory subunits C and H. The proton translocation complex V0 consists of the proton transport subunit a, a ring of proteolipid subunits c9c'', rotary subunit d, subunits e and f, and the accessory subunits ATP6AP1/Ac45 and ATP6AP2/PRR.

Its subcellular location is the cytoplasmic vesicle. The protein localises to the secretory vesicle. It localises to the synaptic vesicle membrane. The protein resides in the clathrin-coated vesicle membrane. Subunit of the V1 complex of vacuolar(H+)-ATPase (V-ATPase), a multisubunit enzyme composed of a peripheral complex (V1) that hydrolyzes ATP and a membrane integral complex (V0) that translocates protons. V-ATPase is responsible for acidifying and maintaining the pH of intracellular compartments and in some cell types, is targeted to the plasma membrane, where it is responsible for acidifying the extracellular environment. This chain is V-type proton ATPase subunit F (Atp6v1f), found in Mus musculus (Mouse).